We begin with the raw amino-acid sequence, 503 residues long: Depupylase (503 aa).

The Mg(2+) site is built by glutamate 8 and tyrosine 92. Aspartate 94 (proton acceptor) is an active-site residue. Residue glutamate 99 participates in Mg(2+) binding. 101–102 provides a ligand contact to ATP; that stretch reads ST. A Mg(2+)-binding site is contributed by histidine 155. 2 residues coordinate ATP: asparagine 157 and arginine 239. Histidine 241 is a Mg(2+) binding site.

The protein belongs to the Pup ligase/Pup deamidase family. Pup deamidase subfamily. In terms of assembly, likely interacts with the C-terminal half of the prokaryotic ubiquitin-like protein Pup. ATP is required as a cofactor.

The protein operates within protein degradation; proteasomal Pup-dependent pathway. Functionally, displays depupylase (DPUP) activity, removing conjugated Pup from target proteins; is thus involved in the recycling of Pup and may function similarly to deubiquitinases (DUBs) in eukaryotes to prevent or promote proteasomal degradation of certain proteins. Is also able to catalyze the deamidation of the C-terminal glutamine to glutamate in a variant of the prokaryotic ubiquitin-like protein Pup; however, since Pup from A.cellulolyticus possesses a C-terminal glutamate, this deamidase activity may be of no significance in vivo. This Acidothermus cellulolyticus (strain ATCC 43068 / DSM 8971 / 11B) protein is Depupylase (dop).